Consider the following 324-residue polypeptide: Glycerol-3-phosphate dehydrogenase [NAD(P)+] (324 aa).

Phenylalanine 11, arginine 31, and lysine 107 together coordinate NADPH. Sn-glycerol 3-phosphate contacts are provided by lysine 107 and glycine 135. Alanine 139 contacts NADPH. Residues lysine 190, aspartate 245, serine 255, arginine 256, and asparagine 257 each contribute to the sn-glycerol 3-phosphate site. Lysine 190 functions as the Proton acceptor in the catalytic mechanism. Arginine 256 is a binding site for NADPH. NADPH contacts are provided by valine 278 and glutamate 279.

It belongs to the NAD-dependent glycerol-3-phosphate dehydrogenase family.

It is found in the cytoplasm. The enzyme catalyses sn-glycerol 3-phosphate + NAD(+) = dihydroxyacetone phosphate + NADH + H(+). It carries out the reaction sn-glycerol 3-phosphate + NADP(+) = dihydroxyacetone phosphate + NADPH + H(+). It participates in membrane lipid metabolism; glycerophospholipid metabolism. Its function is as follows. Catalyzes the reduction of the glycolytic intermediate dihydroxyacetone phosphate (DHAP) to sn-glycerol 3-phosphate (G3P), the key precursor for phospholipid synthesis. The sequence is that of Glycerol-3-phosphate dehydrogenase [NAD(P)+] from Anaplasma phagocytophilum (strain HZ).